The chain runs to 333 residues: MDERLLSGESAYEDSDLEYSLRPQTLRQYIGQDKAKHNLEVFIEAAKMREETLDHVLLYGPPGLGKTTLANIIANEMGVNVRTTSGPAIERPGDLAAVLTALQPGDVLFIDEIHRLHRSIEEVLYPAMEDFCLDIVIGKGPSARSVRLDLPPFTLVGATTRAGALSAPLRDRFGVLSRLEYYTVDQLSAIVERTAEVFEVEIDSLAALEIARRARGTPRIANRLLRRVRDFAQVRGNGTVTMEITQMALELLQVDKLGLDHIDHKLLLGIIEKFRGGPVGLETVSATIGEESHTIEDVYEPYLLQIGFLQRTPRGRIVTPLAYEHFGMEIPKV.

The segment at Met1–Tyr182 is large ATPase domain (RuvB-L). ATP is bound by residues Leu21, Arg22, Gly63, Lys66, Thr67, Thr68, Glu129–Phe131, Arg172, Tyr182, and Arg219. Residue Thr67 coordinates Mg(2+). A small ATPAse domain (RuvB-S) region spans residues Thr183 to Gln253. The tract at residues Lys256–Val333 is head domain (RuvB-H). Arg311 and Arg316 together coordinate DNA.

Belongs to the RuvB family. As to quaternary structure, homohexamer. Forms an RuvA(8)-RuvB(12)-Holliday junction (HJ) complex. HJ DNA is sandwiched between 2 RuvA tetramers; dsDNA enters through RuvA and exits via RuvB. An RuvB hexamer assembles on each DNA strand where it exits the tetramer. Each RuvB hexamer is contacted by two RuvA subunits (via domain III) on 2 adjacent RuvB subunits; this complex drives branch migration. In the full resolvosome a probable DNA-RuvA(4)-RuvB(12)-RuvC(2) complex forms which resolves the HJ.

It is found in the cytoplasm. The enzyme catalyses ATP + H2O = ADP + phosphate + H(+). The RuvA-RuvB-RuvC complex processes Holliday junction (HJ) DNA during genetic recombination and DNA repair, while the RuvA-RuvB complex plays an important role in the rescue of blocked DNA replication forks via replication fork reversal (RFR). RuvA specifically binds to HJ cruciform DNA, conferring on it an open structure. The RuvB hexamer acts as an ATP-dependent pump, pulling dsDNA into and through the RuvAB complex. RuvB forms 2 homohexamers on either side of HJ DNA bound by 1 or 2 RuvA tetramers; 4 subunits per hexamer contact DNA at a time. Coordinated motions by a converter formed by DNA-disengaged RuvB subunits stimulates ATP hydrolysis and nucleotide exchange. Immobilization of the converter enables RuvB to convert the ATP-contained energy into a lever motion, pulling 2 nucleotides of DNA out of the RuvA tetramer per ATP hydrolyzed, thus driving DNA branch migration. The RuvB motors rotate together with the DNA substrate, which together with the progressing nucleotide cycle form the mechanistic basis for DNA recombination by continuous HJ branch migration. Branch migration allows RuvC to scan DNA until it finds its consensus sequence, where it cleaves and resolves cruciform DNA. This is Holliday junction branch migration complex subunit RuvB from Bacillus cereus (strain G9842).